A 249-amino-acid chain; its full sequence is Isoprenyl transferase (249 aa).

Residue Asp29 is part of the active site. Asp29 serves as a coordination point for Mg(2+). Substrate contacts are provided by residues 30–33, Trp34, Arg42, His46, and 74–76; these read GNGR and STE. Asn77 functions as the Proton acceptor in the catalytic mechanism. Substrate is bound by residues Trp78, Arg80, Arg197, and 203–205; that span reads RLS. Glu216 contacts Mg(2+).

The protein belongs to the UPP synthase family. As to quaternary structure, homodimer. Mg(2+) is required as a cofactor.

Its function is as follows. Catalyzes the condensation of isopentenyl diphosphate (IPP) with allylic pyrophosphates generating different type of terpenoids. This Trichormus variabilis (strain ATCC 29413 / PCC 7937) (Anabaena variabilis) protein is Isoprenyl transferase.